We begin with the raw amino-acid sequence, 452 residues long: Down-regulator of invasive growth 1 (452 aa).

Disordered stretches follow at residues 1-145 (MAVS…SAPA) and 262-311 (RNKR…ADLR). Composition is skewed to polar residues over residues 12 to 22 (EDTSIAKSTQD) and 35 to 53 (KGSS…SVGQ). At Ser45 the chain carries Phosphoserine. A compositionally biased stretch (acidic residues) spans 61–77 (PEEDDSGDKEADHEDSE). Over residues 81-100 (AKKRKAQPLKNPKKSLKRGR) the composition is skewed to basic residues. 4 stretches are compositionally biased toward polar residues: residues 107 to 116 (LSDSNTNTHG), 124 to 145 (LASS…SAPA), 269 to 281 (SYDS…ASTG), and 291 to 307 (RNSS…TQQR). Residues Ser126, Ser142, Ser272, and Ser275 each carry the phosphoserine modification. The interaction with FUS3 and KSS1 stretch occupies residues 212 to 452 (IPPPHMLNKP…KSSSHHRTGK (241 aa)). A Phosphoserine modification is found at Ser330. The segment covering 331-348 (ANTKARSASTSTSTSTST) has biased composition (low complexity). The disordered stretch occupies residues 331-395 (ANTKARSAST…QRTSQPQQQS (65 aa)). The span at 349–361 (NRDRSSWHEAEPN) shows a compositional bias: basic and acidic residues. Acidic residues predominate over residues 362–372 (KDEEEGTDLAI). Over residues 378-395 (PTPTFTTFQRTSQPQQQS) the composition is skewed to low complexity. Thr379 carries the post-translational modification Phosphothreonine. A phosphoserine mark is found at Ser395 and Ser428.

Forms a complex with DIG2, STE12 and either FUS3 or KSS1. The interaction of FUS3 with STE12 depends on the presence of both DIG1 and DIG2. STE12 is lost from FUS3/DIG1/DIG2 complex after pheromone treatment. DIG1 and DIG2 have also been reported to interact with CLN1 and CLN2. In terms of processing, phosphorylated by FUS3 and KSS1, in a pheromone-stimulated manner. Phosphorylation reduces the affinity for STE12.

The protein resides in the nucleus. Functionally, DIG1 and DIG2 are negative regulators of the filamentation and pheromone induced mating program. DIG1 and DIG2 inhibit the transcriptional activity of STE12 by direct protein-protein interaction. DIG1 colocalizes to promoters with STE12 and redistributes with it during induction of filamentation (by butanol) or mating (by pheromone) to program specific genes, but binding of DIG1 to STE12 is reduced by pheromone treatment. The protein is Down-regulator of invasive growth 1 (DIG1) of Saccharomyces cerevisiae (strain ATCC 204508 / S288c) (Baker's yeast).